We begin with the raw amino-acid sequence, 406 residues long: Subtilisin-like protease CPC735_023170 (406 aa).

The signal sequence occupies residues 1-20 (MRLFQSTCVLVGTVLPLFTA). Positions 21 to 118 (FPISSPREIE…VEPDSMAYVT (98 aa)) are excised as a propeptide. The region spanning 35–115 (KYIITFKKGI…VESVEPDSMA (81 aa)) is the Inhibitor I9 domain. An N-linked (GlcNAc...) asparagine glycan is attached at Asn125. Residues 127 to 406 (TYGPRRISHR…NKLAYNGSGK (280 aa)) form the Peptidase S8 domain. Catalysis depends on charge relay system residues Asp161 and His192. Residue Asn239 is glycosylated (N-linked (GlcNAc...) asparagine). A disordered region spans residues 283–309 (NDGRDAGRNSPGSAPESITVGSINSRR). An N-linked (GlcNAc...) asparagine glycan is attached at Asn346. The active-site Charge relay system is the Ser351. An N-linked (GlcNAc...) asparagine glycan is attached at Asn402.

This sequence belongs to the peptidase S8 family.

The protein resides in the secreted. Secreted subtilisin-like serine protease with keratinolytic activity that contributes to pathogenicity. The polypeptide is Subtilisin-like protease CPC735_023170 (Coccidioides posadasii (strain C735) (Valley fever fungus)).